A 322-amino-acid chain; its full sequence is uncharacterized protein (322 aa).

The Radical SAM core domain maps to 34–286 (KFKQKIFKIP…QRLSKDKVPE (253 aa)). C50, C58, and C61 together coordinate [4Fe-4S] cluster.

This sequence belongs to the radical SAM superfamily. [4Fe-4S] cluster is required as a cofactor.

This is an uncharacterized protein from Methanocaldococcus jannaschii (strain ATCC 43067 / DSM 2661 / JAL-1 / JCM 10045 / NBRC 100440) (Methanococcus jannaschii).